We begin with the raw amino-acid sequence, 346 residues long: Phosphoribosylformylglycinamidine cyclo-ligase (346 aa).

This sequence belongs to the AIR synthase family.

The protein localises to the cytoplasm. The enzyme catalyses 2-formamido-N(1)-(5-O-phospho-beta-D-ribosyl)acetamidine + ATP = 5-amino-1-(5-phospho-beta-D-ribosyl)imidazole + ADP + phosphate + H(+). The protein operates within purine metabolism; IMP biosynthesis via de novo pathway; 5-amino-1-(5-phospho-D-ribosyl)imidazole from N(2)-formyl-N(1)-(5-phospho-D-ribosyl)glycinamide: step 2/2. In Geobacillus kaustophilus (strain HTA426), this protein is Phosphoribosylformylglycinamidine cyclo-ligase.